The sequence spans 366 residues: Methylthioribose-1-phosphate isomerase (366 aa).

Aspartate 260 acts as the Proton donor in catalysis.

Belongs to the eIF-2B alpha/beta/delta subunits family. MtnA subfamily.

It localises to the cytoplasm. It is found in the nucleus. The enzyme catalyses 5-(methylsulfanyl)-alpha-D-ribose 1-phosphate = 5-(methylsulfanyl)-D-ribulose 1-phosphate. It functions in the pathway amino-acid biosynthesis; L-methionine biosynthesis via salvage pathway; L-methionine from S-methyl-5-thio-alpha-D-ribose 1-phosphate: step 1/6. Its function is as follows. Catalyzes the interconversion of methylthioribose-1-phosphate (MTR-1-P) into methylthioribulose-1-phosphate (MTRu-1-P). This chain is Methylthioribose-1-phosphate isomerase, found in Caenorhabditis elegans.